Reading from the N-terminus, the 474-residue chain is Methylenetetrahydrofolate--tRNA-(uracil-5-)-methyltransferase TrmFO (474 aa).

Residue 13–18 (GGGLAG) participates in FAD binding.

This sequence belongs to the MnmG family. TrmFO subfamily. FAD is required as a cofactor.

It localises to the cytoplasm. It carries out the reaction uridine(54) in tRNA + (6R)-5,10-methylene-5,6,7,8-tetrahydrofolate + NADH + H(+) = 5-methyluridine(54) in tRNA + (6S)-5,6,7,8-tetrahydrofolate + NAD(+). The enzyme catalyses uridine(54) in tRNA + (6R)-5,10-methylene-5,6,7,8-tetrahydrofolate + NADPH + H(+) = 5-methyluridine(54) in tRNA + (6S)-5,6,7,8-tetrahydrofolate + NADP(+). Catalyzes the folate-dependent formation of 5-methyl-uridine at position 54 (M-5-U54) in all tRNAs. The protein is Methylenetetrahydrofolate--tRNA-(uracil-5-)-methyltransferase TrmFO of Bartonella tribocorum (strain CIP 105476 / IBS 506).